A 978-amino-acid chain; its full sequence is uncharacterized protein (978 aa).

Positions 1-27 (MHSWKKKLVVSQLALACTLAITSQANA) are cleaved as a signal peptide. The 266-residue stretch at 713 to 978 (GLADNGGAWV…SANVGVKYTW (266 aa)) folds into the Autotransporter domain.

This is an uncharacterized protein from Salmonella typhimurium (strain LT2 / SGSC1412 / ATCC 700720).